Here is a 146-residue protein sequence, read N- to C-terminus: Large ribosomal subunit protein uL15 (146 aa).

The disordered stretch occupies residues 1–58 (MRLHELHPAPGSRPRATRVGRGIGSGLGKTSGRGHKGQKARSGGGVRRGFEGGQMPLT). The segment covering 21–31 (RGIGSGLGKTS) has biased composition (gly residues).

This sequence belongs to the universal ribosomal protein uL15 family. In terms of assembly, part of the 50S ribosomal subunit.

In terms of biological role, binds to the 23S rRNA. The sequence is that of Large ribosomal subunit protein uL15 from Moorella thermoacetica (strain ATCC 39073 / JCM 9320).